The chain runs to 195 residues: Putative CheY-P phosphatase CheC1 (195 aa).

This sequence belongs to the CheC family.

Its function is as follows. Catalyzes the dephosphorylation of CheY-P. This chain is Putative CheY-P phosphatase CheC1 (cheC1), found in Halobacterium salinarum (strain ATCC 29341 / DSM 671 / R1).